Here is a 218-residue protein sequence, read N- to C-terminus: Acetyl- and succinyl-CoA transferase MT0822 (218 aa).

An N-acetyltransferase domain is found at 32-188; the sequence is DTILEGVHDP…EALLFRLTRD (157 aa). Residues Q94, 109 to 113, 119 to 124, 145 to 151, and R160 contribute to the substrate site; these read SGSWL, GHGYGT, and SRSFVDN.

As to quaternary structure, dimer of dimers.

It catalyses the reaction L-lysyl-[protein] + acetyl-CoA = N(6)-acetyl-L-lysyl-[protein] + CoA + H(+). The catalysed reaction is succinyl-CoA + L-lysyl-[protein] = N(6)-succinyl-L-lysyl-[protein] + CoA + H(+). Its function is as follows. Acetylates and succinylates nucleoid-associated, DNA-binding protein HupB. The chain is Acetyl- and succinyl-CoA transferase MT0822 from Mycobacterium tuberculosis (strain CDC 1551 / Oshkosh).